A 269-amino-acid polypeptide reads, in one-letter code: BAG family molecular chaperone regulator 4 (269 aa).

The tract at residues 1-40 is disordered; the sequence is MMHNSTEESEWEVRPGGMLVQRRDDAASSDHKPLQDPDSA. Positions 21 to 35 are enriched in basic and acidic residues; sequence QRRDDAASSDHKPLQ. The Ubiquitin-like domain maps to 46 to 122; it reads QTIRITVSHG…LVVVVEDTNK (77 aa). Positions 138-219 constitute a BAG domain; it reads AIAAVNAVTG…NLQEAVDKLK (82 aa). The disordered stretch occupies residues 241–269; it reads SFGNGVGSLNPPPPASPSANVTQDWEKFD.

As to quaternary structure, binds to the ATPase domain of HSP70/HSC70 chaperones. Interacts with HSP70-1. Detected in stems, leaves, flowers and roots.

In terms of biological role, co-chaperone that regulates diverse cellular pathways, such as programmed cell death and stress responses. The chain is BAG family molecular chaperone regulator 4 (BAG4) from Arabidopsis thaliana (Mouse-ear cress).